Consider the following 155-residue polypeptide: Secreted RxLR effector protein 38 (155 aa).

The first 17 residues, 1 to 17 (MHLIYIVMAATATTLHA), serve as a signal peptide directing secretion. The RxLR-dEER signature appears at 49–64 (RFLRGAYEDVHREEER).

It belongs to the RxLR effector family.

The protein resides in the secreted. The protein localises to the host nucleus. It localises to the host cytoplasm. In terms of biological role, secreted effector that completely suppresses the host cell death induced by cell death-inducing proteins. The protein is Secreted RxLR effector protein 38 of Plasmopara viticola (Downy mildew of grapevine).